The following is a 468-amino-acid chain: Probable Xaa-Pro aminopeptidase pepP (468 aa).

4 residues coordinate Mn(2+): aspartate 265, aspartate 276, glutamate 399, and glutamate 439.

This sequence belongs to the peptidase M24B family. Mn(2+) is required as a cofactor.

The catalysed reaction is Release of any N-terminal amino acid, including proline, that is linked to proline, even from a dipeptide or tripeptide.. Its function is as follows. Catalyzes the removal of a penultimate prolyl residue from the N-termini of peptides. This Aspergillus fumigatus (strain CBS 144.89 / FGSC A1163 / CEA10) (Neosartorya fumigata) protein is Probable Xaa-Pro aminopeptidase pepP (pepP).